Consider the following 270-residue polypeptide: MEEMALAQQVPNLGLARFSVQDKSILITGATGSLGRVAARALADAGARLTLAGGNSAGLAELVNGAGIDDAAVVTCRPDSLADAQQMVEAALGRYGRLDGVLVASGSNHVAPITEMAVEDFDAVMDANVRGAWLVCRAAGRVLLEQGQGGSVVLVSSVRGGLGNAAGYSAYCPSKAGTDLLAKTLAAEWGGHGIRVNALAPTVFRSAVTEWMFTDDPKGRATREAMLARIPLRRFAEPEDFVGALIYLLSDASSFYTGQVMYLDGGYTAC.

30–55 (ATGSLGRVAARALADAGARLTLAGGN) serves as a coordination point for NADP(+). S157 serves as a coordination point for substrate. The active-site Proton acceptor is Y171.

This sequence belongs to the short-chain dehydrogenases/reductases (SDR) family.

This is an uncharacterized protein from Mycobacterium tuberculosis (strain CDC 1551 / Oshkosh).